A 101-amino-acid polypeptide reads, in one-letter code: UPF0235 protein MMP1055 (101 aa).

It belongs to the UPF0235 family.

The sequence is that of UPF0235 protein MMP1055 from Methanococcus maripaludis (strain DSM 14266 / JCM 13030 / NBRC 101832 / S2 / LL).